The chain runs to 221 residues: Histone H1C (221 aa).

2 disordered regions span residues methionine 1 to serine 43 and alanine 113 to alanine 221. The H15 domain occupies threonine 38–alanine 112. Basic residues-rich tracts occupy residues lysine 141–lysine 167 and alanine 175–alanine 221.

Belongs to the histone H1/H5 family.

It is found in the nucleus. The protein resides in the chromosome. Its function is as follows. Histones H1 are necessary for the condensation of nucleosome chains into higher-order structures. The polypeptide is Histone H1C (Chironomus tentans (Midge)).